We begin with the raw amino-acid sequence, 266 residues long: Hydroxypyruvate/pyruvate aldolase (266 aa).

The active-site Proton acceptor is the His-48. 2 residues coordinate a divalent metal cation: Glu-152 and Asp-178.

The protein belongs to the HpcH/HpaI aldolase family. Requires a divalent metal cation as cofactor.

The catalysed reaction is D-glyceraldehyde + pyruvate = 2-dehydro-3-deoxy-L-galactonate. It catalyses the reaction 2-dehydro-3-deoxy-D-gluconate = D-glyceraldehyde + pyruvate. Aldolase which can catalyze in vitro the aldolisation reaction between hydroxypyruvate (HPA) or pyruvate (PA) and D-glyceraldehyde (D-GA). The condensation of pyruvate and D-glyceraldehyde produces 2-dehydro-3-deoxy-L-galactonate as the major product and 2-dehydro-3-deoxy-D-gluconate. Has weak activity with hydroxypyruvate and D-glyceraldehyde. The chain is Hydroxypyruvate/pyruvate aldolase from Agrobacterium fabrum (strain C58 / ATCC 33970) (Agrobacterium tumefaciens (strain C58)).